Here is a 176-residue protein sequence, read N- to C-terminus: Small ribosomal subunit protein uS5 (176 aa).

Residues 11–74 (LSEVLVDVNR…QAAKKRMMKV (64 aa)) enclose the S5 DRBM domain.

Belongs to the universal ribosomal protein uS5 family. As to quaternary structure, part of the 30S ribosomal subunit. Contacts proteins S4 and S8.

With S4 and S12 plays an important role in translational accuracy. Functionally, located at the back of the 30S subunit body where it stabilizes the conformation of the head with respect to the body. The protein is Small ribosomal subunit protein uS5 of Rickettsia akari (strain Hartford).